A 713-amino-acid polypeptide reads, in one-letter code: Forkhead box protein P2 (713 aa).

Polar residues predominate over residues 1–28 (MMQESATETISNSSMNQNGMSTLSSQLD). Disordered stretches follow at residues 1–45 (MMQE…SEVS) and 279–337 (DNGI…TGAS). Positions 290–303 (TTNNSSSTTSSTTS) are enriched in low complexity. Over residues 313–322 (SIVNGQSSVL) the composition is skewed to polar residues. A compositionally biased stretch (basic and acidic residues) spans 324-335 (ARRDSSSHEETG). The C2H2-type zinc-finger motif lies at 344 to 369 (GVCKWPGCESICEDFGQFLKHLNNEH). A leucine-zipper region spans residues 386-407 (VQQLEIQLSKERERLQAMMTHL). The segment at 420–424 (PLNLV) is CTBP1-binding. Low complexity predominate over residues 436 to 457 (TSPQSLPQTPTTPTAPVTPITQ). Positions 436 to 463 (TSPQSLPQTPTTPTAPVTPITQGPSVIT) are disordered. A DNA-binding region (fork-head) is located at residues 502 to 592 (RPPFTYATLI…SQKITGSPTL (91 aa)). 2 disordered regions span residues 647-666 (LDHIDSNGNSSPGCSPQPHI) and 676-713 (VIAEDEDCPMSLVTTANHSPELEDDREIEEEPLSEDLE). The span at 697–713 (LEDDREIEEEPLSEDLE) shows a compositional bias: acidic residues.

In terms of assembly, forms homodimers and heterodimers with FOXP1 and FOXP4. Dimerization is required for DNA-binding. Interacts with CTBP1. Interacts with FOXP1. Interacts with TBR1. Interacts with ZMYM2.

The protein localises to the nucleus. In terms of biological role, transcriptional repressor that may play a role in the specification and differentiation of lung epithelium. May also play a role in developing neural, gastrointestinal and cardiovascular tissues. Can act with CTBP1 to synergistically repress transcription but CTPBP1 is not essential. Plays a role in synapse formation by regulating SRPX2 levels. The protein is Forkhead box protein P2 (FOXP2) of Hylobates lar (Lar gibbon).